The chain runs to 163 residues: Urease accessory protein UreE (163 aa).

The tract at residues 134-163 (EAGAYGGGHRHHHDDDAPSIRQPARLRIHE) is disordered.

The protein belongs to the UreE family.

It localises to the cytoplasm. Involved in urease metallocenter assembly. Binds nickel. Probably functions as a nickel donor during metallocenter assembly. This Methylobacillus flagellatus (strain ATCC 51484 / DSM 6875 / VKM B-1610 / KT) protein is Urease accessory protein UreE.